The primary structure comprises 375 residues: Glutaconyl-CoA decarboxylase subunit beta (375 aa).

The next 11 membrane-spanning stretches (helical) occupy residues Gly16–Ile39, Leu46–Phe65, Leu74–Thr96, Thr107–Phe130, Ala137–Ala153, Leu160–Ile178, Val208–Leu232, Ala254–Met271, Ile284–Phe302, Pro316–Val332, and Phe345–Leu369.

The protein belongs to the GcdB/MmdB/OadB family. As to quaternary structure, heterooctamer consisting of two alpha, two beta, two gamma and two delta subunits. In terms of processing, the N-terminus is blocked.

The protein localises to the cell membrane. It carries out the reaction (2E)-glutaconyl-CoA + Na(+)(in) + H(+) = (2E)-butenoyl-CoA + Na(+)(out) + CO2. It participates in amino-acid degradation; L-glutamate degradation via hydroxyglutarate pathway; crotonoyl-CoA from L-glutamate: step 5/5. In terms of biological role, tunnel subunit of the primary sodium pump glutaconyl-CoA decarboxylase (GCD). In Acidaminococcus fermentans (strain ATCC 25085 / DSM 20731 / CCUG 9996 / CIP 106432 / VR4), this protein is Glutaconyl-CoA decarboxylase subunit beta (gcdB).